The following is a 362-amino-acid chain: Phospho-N-acetylmuramoyl-pentapeptide-transferase (362 aa).

10 helical membrane-spanning segments follow: residues 28-48 (AACM…IRWL), 72-92 (GTPT…TLLW), 100-120 (VWAV…DDYL), 134-154 (VKLI…MSLT), 170-190 (VLIP…MGAS), 201-221 (GLAI…AYLV), 241-261 (LTVF…FNAP), 265-285 (VFMG…VAIA), 290-310 (IVLA…IVQV), and 339-359 (TIVI…LATL).

The protein belongs to the glycosyltransferase 4 family. MraY subfamily. The cofactor is Mg(2+).

It localises to the cell inner membrane. It carries out the reaction UDP-N-acetyl-alpha-D-muramoyl-L-alanyl-gamma-D-glutamyl-meso-2,6-diaminopimeloyl-D-alanyl-D-alanine + di-trans,octa-cis-undecaprenyl phosphate = di-trans,octa-cis-undecaprenyl diphospho-N-acetyl-alpha-D-muramoyl-L-alanyl-D-glutamyl-meso-2,6-diaminopimeloyl-D-alanyl-D-alanine + UMP. Its pathway is cell wall biogenesis; peptidoglycan biosynthesis. In terms of biological role, catalyzes the initial step of the lipid cycle reactions in the biosynthesis of the cell wall peptidoglycan: transfers peptidoglycan precursor phospho-MurNAc-pentapeptide from UDP-MurNAc-pentapeptide onto the lipid carrier undecaprenyl phosphate, yielding undecaprenyl-pyrophosphoryl-MurNAc-pentapeptide, known as lipid I. The sequence is that of Phospho-N-acetylmuramoyl-pentapeptide-transferase from Granulibacter bethesdensis (strain ATCC BAA-1260 / CGDNIH1).